A 707-amino-acid chain; its full sequence is Choline transporter-like protein 4 (707 aa).

The Cytoplasmic portion of the chain corresponds to 1 to 32; that stretch reads MGRKQNENEAHGNSAKYDPSFRGPIKNRGCTD. A helical membrane pass occupies residues 33–53; that stretch reads IICCVLFLIFILGYIIVGLVA. The Extracellular portion of the chain corresponds to 54–227; it reads WVYGDPRQVL…KIFEDFAQSW (174 aa). N-linked (GlcNAc...) asparagine glycosylation is found at Asn-67, Asn-185, Asn-195, and Asn-196. The chain crosses the membrane as a helical span at residues 228 to 248; it reads YWILVALGVALALSLLFILLL. Residues 249 to 250 are Cytoplasmic-facing; it reads RL. A helical membrane pass occupies residues 251–271; that stretch reads VAAPLVLLLIVGVLAVLAYGI. The Extracellular portion of the chain corresponds to 272–307; that stretch reads YHCWQQYQVFRDKGASITQLGFTTNFSAYQSVKETW. N-linked (GlcNAc...) asparagine glycosylation occurs at Asn-296. The helical transmembrane segment at 308–328 threads the bilayer; the sequence is LAALIVLAVLEGILLLMLIFL. Topologically, residues 329-356 are cytoplasmic; the sequence is RQRIRIAIALLKEASRAVGQMMSTMFYP. The chain crosses the membrane as a helical span at residues 357 to 377; that stretch reads LVTFVLLVICIGYWAVTALYL. Topologically, residues 378–452 are extracellular; that stretch reads ATSGQPQYIY…GVLGLFWTVN (75 aa). Asn-391, Asn-403, and Asn-413 each carry an N-linked (GlcNAc...) asparagine glycan. The helical transmembrane segment at 453–473 threads the bilayer; that stretch reads WVLALGQCVLAGAFASFYWAF. The Cytoplasmic segment spans residues 474–498; the sequence is HKPRDIPTFPLSSAFIRTLRYHTGS. A helical membrane pass occupies residues 499–519; the sequence is LAFGALILSLVQIARVILEYI. Over 520–557 the chain is Extracellular; it reads DHKLRGSQNPVARCIICCFKCCLWCLEKFIKFLNRNAY. A helical membrane pass occupies residues 558–578; that stretch reads IMIAIYGKNFCVSAKNAFMLL. Residues 579-594 lie on the Cytoplasmic side of the membrane; it reads MRNVLRVVVLDKVTDL. A helical membrane pass occupies residues 595-615; the sequence is LLFFGKLLVVGGVGVLSFFFF. Over 616–635 the chain is Extracellular; it reads SGRIKGLGKDFENPNLNYYW. The chain crosses the membrane as a helical span at residues 636 to 656; the sequence is LPIMTSIMGAYVIASGFFSVF. Residues 657–707 are Cytoplasmic-facing; that stretch reads GMCVDTLFLCFLEDLERNDGSQERPYYMPKALLKILGKKNEAPTGGKTRKK.

Belongs to the CTL (choline transporter-like) family. N-glycosylated; N-glycosylation of Asn-67 and Asn-391 is required for a proper thiamine pyrophosphate uptake. Expressed in colon and cecum.

It is found in the membrane. Its subcellular location is the apical cell membrane. It carries out the reaction choline(out) + n H(+)(in) = choline(in) + n H(+)(out). The catalysed reaction is thiamine diphosphate(out) = thiamine diphosphate(in). Choline transporter that plays a role in the choline-acetylcholine system and is required to the efferent innervation of hair cells in the olivocochlear bundle for the maintenance of physiological function of outer hair cells and the protection of hair cells from acoustic injury. Also described as a thiamine pyrophosphate transporter in colon, may mediate the absorption of microbiota-generated thiamine pyrophosphate and contribute to host thiamine (vitamin B1) homeostasis. The polypeptide is Choline transporter-like protein 4 (Mus musculus (Mouse)).